Reading from the N-terminus, the 521-residue chain is Medium/long-chain-fatty-acid--[acyl-carrier-protein] ligase MbtM (521 aa).

It belongs to the ATP-dependent AMP-binding enzyme family.

The enzyme catalyses a long-chain fatty acid + holo-[ACP] + ATP = a long-chain fatty acyl-[ACP] + AMP + diphosphate. It carries out the reaction a medium-chain fatty acid + holo-[ACP] + ATP = a medium-chain fatty acyl-[ACP] + AMP + diphosphate. It participates in siderophore biosynthesis; mycobactin biosynthesis. Activates lipidic moieties required for mycobactin biosynthesis. Converts medium- to long-chain aliphatic fatty acids into acyl adenylate, which is further transferred on to the phosphopantetheine arm of the carrier protein MbtL. This chain is Medium/long-chain-fatty-acid--[acyl-carrier-protein] ligase MbtM (mbtM), found in Mycobacterium sp. (strain MCS).